The following is a 304-amino-acid chain: Fructose permease IIC component (304 aa).

The PTS EIIC type-2 domain occupies 1 to 304 (IHSADPKDPT…GIIKKPVEEK (304 aa)). 8 helical membrane-spanning segments follow: residues 20–40 (FIGS…FIAM), 62–82 (NAGF…VILL), 98–118 (PVLI…QFVI), 140–160 (NLVL…GGPL), 181–201 (AAIM…TTFF), 214–234 (ITCY…FAAA), 238–258 (VIPA…FFRV), and 277–297 (LLYL…LGII).

The protein localises to the cell membrane. Functionally, the phosphoenolpyruvate-dependent sugar phosphotransferase system (PTS), a major carbohydrate active -transport system, catalyzes the phosphorylation of incoming sugar substrates concomitant with their translocation across the cell membrane. This system is involved in fructose transport. The sequence is that of Fructose permease IIC component (fruA) from Bacillus amyloliquefaciens (Bacillus velezensis).